The primary structure comprises 298 residues: ADP-ribosylation factor GTPase-activating protein effector protein 2 (298 aa).

Position 2 is an N-acetylserine (serine 2). The 123-residue stretch at 8 to 130 (KKALSALLRD…KWIGDLSSIE (123 aa)) folds into the Arf-GAP domain. Residues 23-47 (CADCKAQLHPRWASWSLGVFICIKC) form a C4-type zinc finger. The segment at 137–180 (EPVLHKPSANHSLPASNARLDQSSNSLQKTQTQPPSHLLSTSRS) is disordered. A compositionally biased stretch (polar residues) spans 145–171 (ANHSLPASNARLDQSSNSLQKTQTQPP). Residues serine 180, serine 183, and serine 207 each carry the phosphoserine modification.

The protein localises to the cytoplasm. It is found in the golgi apparatus. Its function is as follows. GTPase-activating protein for the ADP ribosylation factor family. In Saccharomyces cerevisiae (strain ATCC 204508 / S288c) (Baker's yeast), this protein is ADP-ribosylation factor GTPase-activating protein effector protein 2 (AGE2).